The following is a 2144-amino-acid chain: MTSLAQQLQRLALPQSDASLLSRDEVASLLFDPKEAATIDRDTAFAIGCTGLEELLGIDPSFEQFEAPLFSQLAKTLERSVQTKAVNKQLDENISLFLIHLSPYFLLKPAQKCLEWLIHRFHIHLYNQDSLIACVLPYHETRIFVRVIQLLKINNSKHRWFWLLPVKQSGVPLAKGTLITHCYKDLGFMDFICSLVTKSVKVFAEYPGSSAQLRVLLAFYASTIVSALVAAEDVSDNIIAKLFPYIQKGLKSSLPDYRAATYMIICQISVKVTMENTFVNSLASQIIKTLTKIPSLIKDGLSCLIVLLQRQKPESLGKKPFPHLCNVPDLITILHGISETYDVSPLLHYMLPHLVVSIIHHVTGEETEGMDGQIYKRHLEAILTKISLKNNLDHLLASLLFEEYISYSSQEEMDSNKVSLLNEQFLPLIRLLESKYPRTLDVVLEEHLKEIADLKKQELFHQFVSLSTSGGKYQFLADSDTSLMLSLNHPLAPVRILAMNHLKKIMKTSKEGVDESFIKEAVLARLGDDNIDVVLSAISAFEIFKEHFSSEVTISNLLNLFQRAELSKNGEWYEVLKIAADILIKEEILSENDQLSNQVVVCLLPFMVINNDDTESAEMKIAIYLSKSGICSLHPLLRGWEEALENVIKSTKPGKLIGVANQKMIELLADNINLGDPSSMLKMVEDLISVGEEESFNLKQKVTFHVILSVLVSCCSSLKETHFPFAIRVFSLLQKKIKKLESVITAVEIPSEWHIELMLDRGIPVELWAHYVEELNSTQRVAVEDSVFLVFSLKKFIYALKAPKSFPKGDIWWNPEQLKEDSRDYLHLLIGLFEMMLNGADAVHFRVLMKLFIKVHLEDVFQLFKFCSVLWTYGSSLSNPLNCSVKTVLQTQALYVGCAMLSSQKTQCKHQLASISSPVVTSLLINLGSPVKEVRRAAIQCLQALSGVASPFYLIIDHLISKAEEITSDAAYVIQDLATLFEELQREKKLKSHQKLSETLKNLLSCVYSCPSYIAKDLMKVLQGVNGEMVLSQLLPMAEQLLEKIQKEPTAVLKDEAMVLHLTLGKYNEFSVSLLNEDPKSLDIFIKAVHTTKELYAGMPTIQITALEKITKPFFAAISDEKVQQKLLRMLFDLLVNCKNSHCAQTVSSVFKGISVNAEQVRIELEPPDKAKPLGTVQQKRRQKMQQKKSQDLESVQEVGGSYWQRVTLILELLQHKKKLRSPQILVPTLFNLLSRCLEPLPQEQGNMEYTKQLILSCLLNICQKLSPDGGKIPKDILDEEKFNVELIVQCIRLSEMPQTHHHALLLLGTVAGIFPDKVLHNIMSIFTFMGANVMRLDDTYSFQVINKTVKMVIPALIQSDSGDSIEVSRNVEEIVVKIISVFVDALPHVPEHRRLPILVQLVDTLGAEKFLWILLILLFEQYVTKTVLAAAYGEKDAILEADTEFWFSVCCEFSVQHQIQSLMNILQYLLKLPEEKEETIPKAVSFNKSESQEEMLQVFNVETHTSKQLRHFKFLSVSFMSQLLSSNNFLKKVVESGGPEILKGLEERLLETVLGYISAVAQSMERNADKLTVKFWRALLSKAYDLLDKVNALLPTETFIPVIRGLVGNPLPSVRRKALDLLNNKLQQNISWKKTIVTRFLKLVPDLLAIVQRKKKEGEEEQAINRQTALYTLKLLCKNFGAENPDPFVPVLNTAVKLIAPERKEEKNVLGSALLCIAEVTSTLEALAIPQLPSLMPSLLTTMKNTSELVSSEVYLLSALAALQKVVETLPHFISPYLEGILSQVIHLEKITSEMGSASQANIRLTSLKKTLATTLAPRVLLPAIKKTYKQIEKNWKNHMGPFMSILQEHIGVMKKEELTSHQSQLTAFFLEALDFRAQHSENDLEEVGKTENCIIDCLVAMVVKLSEVTFRPLFFKLFDWAKTEDAPKDRLLTFYNLADCIAEKLKGLFTLFAGHLVKPFADTLNQVNISKTDEAFFDSENDPEKCCLLLQFILNCLYKIFLFDTQHFISKERAEALMMPLVDQLENRLGGEEKFQERVTKHLIPCIAQFSVAMADDSLWKPLNYQILLKTRDSSPKVRFAALITVLALAEKLKENYIVLLPESIPFLAELMEDECEEVEHQCQKTIQQLETVLGEPLQSYF.

Position 1 is an N-acetylmethionine (Met-1). Thr-2 is modified (N-acetylthreonine; in HEAT repeat-containing protein 1, N-terminally processed). The residue at position 516 (Ser-516) is a Phosphoserine. One copy of the HEAT 1 repeat lies at 913–951 (ASISSPVVTSLLINLGSPVKEVRRAAIQCLQALSGVASP). Residues 1170 to 1191 (KAKPLGTVQQKRRQKMQQKKSQ) are disordered. Ser-1190 carries the post-translational modification Phosphoserine. The HEAT 2 repeat unit spans residues 1347 to 1385 (NKTVKMVIPALIQSDSGDSIEVSRNVEEIVVKIISVFVD). Phosphoserine is present on Ser-1492. 3 HEAT repeats span residues 1594 to 1632 (LLPT…QNIS), 1730 to 1770 (IPQL…VVET), and 2100 to 2138 (IVLL…VLGE).

The protein belongs to the HEATR1/UTP10 family. As to quaternary structure, part of the small subunit (SSU) processome, composed of more than 70 proteins and the RNA chaperone small nucleolar RNA (snoRNA) U3. Interacts with MYC; the interaction is required for localization of MYC to the nucleolus.

It is found in the nucleus. It localises to the nucleolus. Functionally, ribosome biogenesis factor; required for recruitment of Myc to nucleoli. Involved in nucleolar processing of pre-18S ribosomal RNA. Required for optimal pre-ribosomal RNA transcription by RNA polymerase I. Part of the small subunit (SSU) processome, first precursor of the small eukaryotic ribosomal subunit. During the assembly of the SSU processome in the nucleolus, many ribosome biogenesis factors, an RNA chaperone and ribosomal proteins associate with the nascent pre-rRNA and work in concert to generate RNA folding, modifications, rearrangements and cleavage as well as targeted degradation of pre-ribosomal RNA by the RNA exosome. Involved in neuronal-lineage cell proliferation. This chain is HEAT repeat-containing protein 1, found in Homo sapiens (Human).